Reading from the N-terminus, the 374-residue chain is WW domain-binding protein 4 (374 aa).

Residues 11 to 42 (KFCDYCKCWIADNRPSVEFHERGKNHKENVAR) form a Matrin-type zinc finger. Positions 91–109 (EPTISPVTNTVQPTPTANQ) are enriched in polar residues. Disordered stretches follow at residues 91–126 (EPTISPVTNTVQPTPTANQQKEKKKKKKKKEASKGR) and 188–328 (SKWE…EAGA). Residues 112 to 121 (EKKKKKKKKE) show a composition bias toward basic residues. 2 consecutive WW domains span residues 121–154 (EASKGRWVEGVTADGHCYYYDLVTGASQWEKPEG) and 162–195 (TAAKAIWVEGLSEDGYTYYYNTETGESKWEKPDD). Basic and acidic residues-rich tracts occupy residues 188–197 (SKWEKPDDFI) and 205–270 (SSKD…EKTT). Residues Ser219, Ser226, and Ser228 each carry the phosphoserine modification. Residues 315-325 (STENECLSSSE) are compositionally biased toward polar residues. Residues 355–373 (KKRRIENGKSRNLRQRGED) are interaction with SNRNP200.

Component of the spliceosome B complex. Associated with U2 snRNPs. Binds splicing factors SNRPB, SNRPC and SF1. Interacts via the WW domains with the Pro-rich domains of KHDRBS1/SAM68. Interacts via the WW domains with the Pro-rich domains of WBP11. Interacts with SNRNP200.

It localises to the nucleus. The protein localises to the nucleus speckle. In terms of biological role, involved in pre-mRNA splicing as a component of the spliceosome. May play a role in cross-intron bridging of U1 and U2 snRNPs in the mammalian A complex. In Rattus norvegicus (Rat), this protein is WW domain-binding protein 4 (Wbp4).